Reading from the N-terminus, the 164-residue chain is C-type natriuretic peptide (164 aa).

The first 23 residues, 1–23 (MVASRLAAGGLLLLALLALALDG), serve as a signal peptide directing secretion. Disordered stretches follow at residues 24–93 (KPAP…AAAA) and 115–134 (HPEH…GASR). The propeptide occupies 24–142 (KPAPPQPLRK…SRRLKGVAKK (119 aa)). The segment covering 58–67 (AGGGGGGGRS) has biased composition (gly residues). Residues 68 to 93 (GSKAANAAPTAPKSKGGAAAAAAAAA) are compositionally biased toward low complexity. Over residues 121 to 132 (GGGGGGGGGGGA) the composition is skewed to gly residues. The cysteines at positions 148 and 164 are disulfide-linked.

This sequence belongs to the natriuretic peptide family. Expressed by the venom gland.

It localises to the secreted. Its function is as follows. Snake venom natriuretic peptide that has a vasorelaxant activity in rat aortic strips and a diuretic potency in anesthetized rats. May act by activating natriuretic receptors (NPR1 and/or NPR2). The chain is C-type natriuretic peptide from Philodryas olfersii (Green snake).